The chain runs to 78 residues: DNA-directed RNA polymerase subunit Rpo5 (78 aa).

This sequence belongs to the archaeal Rpo5/eukaryotic RPB5 RNA polymerase subunit family. In terms of assembly, part of the RNA polymerase complex.

It localises to the cytoplasm. The catalysed reaction is RNA(n) + a ribonucleoside 5'-triphosphate = RNA(n+1) + diphosphate. In terms of biological role, DNA-dependent RNA polymerase (RNAP) catalyzes the transcription of DNA into RNA using the four ribonucleoside triphosphates as substrates. The sequence is that of DNA-directed RNA polymerase subunit Rpo5 from Methanosarcina acetivorans (strain ATCC 35395 / DSM 2834 / JCM 12185 / C2A).